The following is a 352-amino-acid chain: Photosystem II D2 protein (352 aa).

The chain crosses the membrane as a helical span at residues 40-60 (CAYLAVGAWFTGTTFVTSWYT). A chlorophyll a-binding site is contributed by His-117. Residues 124-140 (GFTLRQFEIARLIGLRP) form a helical membrane-spanning segment. Pheophytin a is bound by residues Gln-129 and Asn-142. Residues 152–165 (VFVSVFLLYPLGQA) traverse the membrane as a helical segment. His-197 contributes to the chlorophyll a binding site. A helical transmembrane segment spans residues 207-227 (AALLCAIHGATVENTLFEDGD). Positions 214 and 261 each coordinate a plastoquinone. His-214 lines the Fe cation pocket. Residue His-268 coordinates Fe cation. The helical transmembrane segment at 278–294 (GLWMSAIGVVGLGVNLR) threads the bilayer.

Belongs to the reaction center PufL/M/PsbA/D family. As to quaternary structure, PSII is composed of 1 copy each of membrane proteins PsbA, PsbB, PsbC, PsbD, PsbE, PsbF, PsbH, PsbI, PsbJ, PsbK, PsbL, PsbM, PsbT, PsbX, PsbY, PsbZ, Psb30/Ycf12, at least 3 peripheral proteins of the oxygen-evolving complex and a large number of cofactors. It forms dimeric complexes. It depends on The D1/D2 heterodimer binds P680, chlorophylls that are the primary electron donor of PSII, and subsequent electron acceptors. It shares a non-heme iron and each subunit binds pheophytin, quinone, additional chlorophylls, carotenoids and lipids. There is also a Cl(-1) ion associated with D1 and D2, which is required for oxygen evolution. The PSII complex binds additional chlorophylls, carotenoids and specific lipids. as a cofactor.

It localises to the plastid. It is found in the cyanelle thylakoid membrane. The catalysed reaction is 2 a plastoquinone + 4 hnu + 2 H2O = 2 a plastoquinol + O2. Photosystem II (PSII) is a light-driven water:plastoquinone oxidoreductase that uses light energy to abstract electrons from H(2)O, generating O(2) and a proton gradient subsequently used for ATP formation. It consists of a core antenna complex that captures photons, and an electron transfer chain that converts photonic excitation into a charge separation. The D1/D2 (PsbA/PsbD) reaction center heterodimer binds P680, the primary electron donor of PSII as well as several subsequent electron acceptors. D2 is needed for assembly of a stable PSII complex. This is Photosystem II D2 protein from Cyanophora paradoxa.